A 133-amino-acid chain; its full sequence is Maturin (133 aa).

It belongs to the MTURN family.

The protein localises to the cytoplasm. May be involved in early neuronal development. May play a role in promoting megakaryocyte differentiation. In Danio rerio (Zebrafish), this protein is Maturin (mturn).